A 235-amino-acid chain; its full sequence is Small ribosomal subunit protein uS3 (235 aa).

Residues 39–107 (VRKFLNKELA…PAQINIAEVK (69 aa)) form the KH type-2 domain.

Belongs to the universal ribosomal protein uS3 family. Part of the 30S ribosomal subunit. Forms a tight complex with proteins S10 and S14.

Its function is as follows. Binds the lower part of the 30S subunit head. Binds mRNA in the 70S ribosome, positioning it for translation. This Mannheimia succiniciproducens (strain KCTC 0769BP / MBEL55E) protein is Small ribosomal subunit protein uS3.